Here is a 293-residue protein sequence, read N- to C-terminus: Protein nud-2 (293 aa).

Residues 36-147 are a coiled coil; the sequence is EIEKMMDSEL…EKIAMLESEL (112 aa). Positions 239 to 293 are required for interaction with unc-83 isoform c; the sequence is KSQRVSTGTGAGACINRIVKDLMTKVERLDSILSTIRVSNNSSNNNSSHLTTTRA.

The protein belongs to the nudE family. As to quaternary structure, component of a dynein-regulating complex composed of at least lis-1 and nud-2. Interacts with lis-1; the interaction is direct. Interacts (via C-terminus) with unc-83; the interaction is direct, and is required for recruitment of nud-2 to the nuclear envelope. Expressed in ventral cord neurons, the pharynx, seam cells of the hypodermis and in vulval muscle cells.

The protein localises to the nucleus envelope. In terms of biological role, part of a complex with lis-1, which is recruited to the nuclear envelope by unc-83, where, in turn, it recruits dynein to the nuclear surface and regulates nuclear migration in hypodermal precursor cells. Plays a role in GABAergic synaptic vesicle localization in the ventral nerve cord. In Caenorhabditis elegans, this protein is Protein nud-2.